We begin with the raw amino-acid sequence, 351 residues long: Histidinol-phosphate aminotransferase (351 aa).

Lysine 215 is subject to N6-(pyridoxal phosphate)lysine.

The protein belongs to the class-II pyridoxal-phosphate-dependent aminotransferase family. Histidinol-phosphate aminotransferase subfamily. Pyridoxal 5'-phosphate serves as cofactor.

The enzyme catalyses L-histidinol phosphate + 2-oxoglutarate = 3-(imidazol-4-yl)-2-oxopropyl phosphate + L-glutamate. Its pathway is amino-acid biosynthesis; L-histidine biosynthesis; L-histidine from 5-phospho-alpha-D-ribose 1-diphosphate: step 7/9. The protein is Histidinol-phosphate aminotransferase of Methanocorpusculum labreanum (strain ATCC 43576 / DSM 4855 / Z).